The following is a 369-amino-acid chain: Glutamate 5-kinase (369 aa).

Residue lysine 9 participates in ATP binding. Residues serine 49, aspartate 136, and asparagine 148 each coordinate substrate. Residues 168 to 169 (TD) and 210 to 216 (TGGMLTK) contribute to the ATP site. The 81-residue stretch at 275–355 (QGSIWVDKGA…KGVLIYRDDW (81 aa)) folds into the PUA domain.

Belongs to the glutamate 5-kinase family.

Its subcellular location is the cytoplasm. The catalysed reaction is L-glutamate + ATP = L-glutamyl 5-phosphate + ADP. It participates in amino-acid biosynthesis; L-proline biosynthesis; L-glutamate 5-semialdehyde from L-glutamate: step 1/2. Its function is as follows. Catalyzes the transfer of a phosphate group to glutamate to form L-glutamate 5-phosphate. This is Glutamate 5-kinase from Streptococcus pneumoniae (strain ATCC 700669 / Spain 23F-1).